Consider the following 90-residue polypeptide: Electron transfer flavoprotein regulatory factor 1 (90 aa).

Belongs to the complex I LYR family. As to quaternary structure, homotetramer. Interacts with NDUFAB1. Interacts with ETFA. Interacts with ETFB.

It is found in the mitochondrion. Functionally, acts as a regulator of the electron transfer flavoprotein by promoting the removal of flavin from the ETF holoenzyme (composed of ETFA and ETFB). The chain is Electron transfer flavoprotein regulatory factor 1 from Homo sapiens (Human).